Here is an 89-residue protein sequence, read N- to C-terminus: Small ribosomal subunit protein uS15 (89 aa).

It belongs to the universal ribosomal protein uS15 family. Part of the 30S ribosomal subunit. Forms a bridge to the 50S subunit in the 70S ribosome, contacting the 23S rRNA.

One of the primary rRNA binding proteins, it binds directly to 16S rRNA where it helps nucleate assembly of the platform of the 30S subunit by binding and bridging several RNA helices of the 16S rRNA. In terms of biological role, forms an intersubunit bridge (bridge B4) with the 23S rRNA of the 50S subunit in the ribosome. In Porphyromonas gingivalis (strain ATCC 33277 / DSM 20709 / CIP 103683 / JCM 12257 / NCTC 11834 / 2561), this protein is Small ribosomal subunit protein uS15.